The following is a 216-amino-acid chain: ATP-dependent dethiobiotin synthetase BioD (216 aa).

12 to 17 (NVGKTF) contacts ATP. Residue Thr-16 coordinates Mg(2+). The active site involves Lys-36. Ser-40 contributes to the substrate binding site. ATP-binding positions include Asp-53, 110 to 113 (EGAG), and 170 to 171 (NQ). Residues Asp-53 and Glu-110 each coordinate Mg(2+).

This sequence belongs to the dethiobiotin synthetase family. Homodimer. Mg(2+) serves as cofactor.

It localises to the cytoplasm. It carries out the reaction (7R,8S)-7,8-diammoniononanoate + CO2 + ATP = (4R,5S)-dethiobiotin + ADP + phosphate + 3 H(+). It functions in the pathway cofactor biosynthesis; biotin biosynthesis; biotin from 7,8-diaminononanoate: step 1/2. In terms of biological role, catalyzes a mechanistically unusual reaction, the ATP-dependent insertion of CO2 between the N7 and N8 nitrogen atoms of 7,8-diaminopelargonic acid (DAPA, also called 7,8-diammoniononanoate) to form a ureido ring. The polypeptide is ATP-dependent dethiobiotin synthetase BioD (Vesicomyosocius okutanii subsp. Calyptogena okutanii (strain HA)).